A 345-amino-acid polypeptide reads, in one-letter code: UPF0324 membrane protein RB0971 (345 aa).

Helical transmembrane passes span 13-32, 42-61, 93-115, 130-152, 161-183, 193-215, 228-247, 262-284, 291-310, and 320-342; these read SLSV…AAVA, YGAP…HFLA, LLIG…TILF, ALLT…AAVL, NLIF…YPIV, ATGI…GFSV, LIRV…VLRS, VPGF…VPVL, AISR…KTSL, and AVAL…MYYL.

The protein belongs to the UPF0324 family.

It is found in the cell membrane. In Rhizobium meliloti (strain 1021) (Ensifer meliloti), this protein is UPF0324 membrane protein RB0971.